A 142-amino-acid polypeptide reads, in one-letter code: Transcriptional regulator MraZ (142 aa).

SpoVT-AbrB domains follow at residues 5–47 (EFQH…PQHE) and 76–119 (ATEC…SKEE).

This sequence belongs to the MraZ family. In terms of assembly, forms oligomers.

The protein localises to the cytoplasm. The protein resides in the nucleoid. The protein is Transcriptional regulator MraZ of Desulforamulus reducens (strain ATCC BAA-1160 / DSM 100696 / MI-1) (Desulfotomaculum reducens).